Here is a 196-residue protein sequence, read N- to C-terminus: Pyridoxal 5'-phosphate synthase subunit PdxT (196 aa).

47-49 (GES) provides a ligand contact to L-glutamine. Catalysis depends on C79, which acts as the Nucleophile. L-glutamine-binding positions include R106 and 134–135 (IR). Catalysis depends on charge relay system residues H170 and E172.

The protein belongs to the glutaminase PdxT/SNO family. In terms of assembly, in the presence of PdxS, forms a dodecamer of heterodimers. Only shows activity in the heterodimer.

The catalysed reaction is aldehydo-D-ribose 5-phosphate + D-glyceraldehyde 3-phosphate + L-glutamine = pyridoxal 5'-phosphate + L-glutamate + phosphate + 3 H2O + H(+). It catalyses the reaction L-glutamine + H2O = L-glutamate + NH4(+). It functions in the pathway cofactor biosynthesis; pyridoxal 5'-phosphate biosynthesis. Catalyzes the hydrolysis of glutamine to glutamate and ammonia as part of the biosynthesis of pyridoxal 5'-phosphate. The resulting ammonia molecule is channeled to the active site of PdxS. The sequence is that of Pyridoxal 5'-phosphate synthase subunit PdxT from Bacillus cereus (strain B4264).